Reading from the N-terminus, the 304-residue chain is Putative ankyrin repeat protein R602 (304 aa).

6 ANK repeats span residues 82 to 117, 118 to 146, 147 to 176, 178 to 206, 207 to 236, and 238 to 266; these read LIRY…DITF, NDNF…DVHA, DNEF…DPFC, DNIV…DINA, GNNY…SIND, and SPND…DIST.

This is Putative ankyrin repeat protein R602 from Acanthamoeba polyphaga (Amoeba).